The following is a 742-amino-acid chain: Phosphoribosylformylglycinamidine synthase subunit PurL (742 aa).

H54 is an active-site residue. 2 residues coordinate ATP: Y57 and K96. Mg(2+) is bound at residue E98. Residues 99 to 102 and R121 each bind substrate; that span reads SHNH. The Proton acceptor role is filled by H100. D122 provides a ligand contact to Mg(2+). Q245 contributes to the substrate binding site. D273 serves as a coordination point for Mg(2+). Residue 317–319 coordinates substrate; the sequence is ESQ. Residues D500 and G537 each contribute to the ATP site. N538 is a binding site for Mg(2+). Residue S540 coordinates substrate.

The protein belongs to the FGAMS family. In terms of assembly, monomer. Part of the FGAM synthase complex composed of 1 PurL, 1 PurQ and 2 PurS subunits.

It localises to the cytoplasm. It carries out the reaction N(2)-formyl-N(1)-(5-phospho-beta-D-ribosyl)glycinamide + L-glutamine + ATP + H2O = 2-formamido-N(1)-(5-O-phospho-beta-D-ribosyl)acetamidine + L-glutamate + ADP + phosphate + H(+). Its pathway is purine metabolism; IMP biosynthesis via de novo pathway; 5-amino-1-(5-phospho-D-ribosyl)imidazole from N(2)-formyl-N(1)-(5-phospho-D-ribosyl)glycinamide: step 1/2. Functionally, part of the phosphoribosylformylglycinamidine synthase complex involved in the purines biosynthetic pathway. Catalyzes the ATP-dependent conversion of formylglycinamide ribonucleotide (FGAR) and glutamine to yield formylglycinamidine ribonucleotide (FGAM) and glutamate. The FGAM synthase complex is composed of three subunits. PurQ produces an ammonia molecule by converting glutamine to glutamate. PurL transfers the ammonia molecule to FGAR to form FGAM in an ATP-dependent manner. PurS interacts with PurQ and PurL and is thought to assist in the transfer of the ammonia molecule from PurQ to PurL. This is Phosphoribosylformylglycinamidine synthase subunit PurL from Geobacillus sp. (strain WCH70).